Here is a 125-residue protein sequence, read N- to C-terminus: Evasin P672 (125 aa).

Positions 1–21 (MAHKIAIGLVCVLYALHIMSA) are cleaved as a signal peptide. N-linked (GlcNAc...) asparagine glycosylation is found at Asn35, Asn55, Asn65, Asn72, Asn78, Asn104, Asn112, and Asn118. Cystine bridges form between Cys70–Cys110, Cys87–Cys115, and Cys105–Cys124.

Its subcellular location is the secreted. Its function is as follows. Salivary chemokine-binding protein which has chemokine-neutralizing activity and binds to host chemokines CCL1, CCL2, CCL3, CCL3L1, CCL7, CCL8, CCL11, CCL12, CCL13, CCL14, CCL15, CCL16, CCL18 and CCL23. Binds to CCL8 with 1:1 stoichiometry and disrupts CCL8 homodimer formation. The chain is Evasin P672 from Rhipicephalus pulchellus (Yellow backed tick).